A 252-amino-acid chain; its full sequence is Chitooligosaccharide deacetylase (252 aa).

Mg(2+) is bound by residues His61 and His125.

The protein belongs to the YdjC deacetylase family. ChbG subfamily. Homodimer. The cofactor is Mg(2+).

It localises to the cytoplasm. It carries out the reaction N,N'-diacetylchitobiose + H2O = N-acetyl-beta-D-glucosaminyl-(1-&gt;4)-D-glucosamine + acetate. The catalysed reaction is diacetylchitobiose-6'-phosphate + H2O = N'-monoacetylchitobiose-6'-phosphate + acetate. It functions in the pathway glycan degradation; chitin degradation. Functionally, involved in the degradation of chitin. ChbG is essential for growth on the acetylated chitooligosaccharides chitobiose and chitotriose but is dispensable for growth on cellobiose and chitosan dimer, the deacetylated form of chitobiose. Deacetylation of chitobiose-6-P and chitotriose-6-P is necessary for both the activation of the chb promoter by the regulatory protein ChbR and the hydrolysis of phosphorylated beta-glucosides by the phospho-beta-glucosidase ChbF. Catalyzes the removal of only one acetyl group from chitobiose-6-P to yield monoacetylchitobiose-6-P, the inducer of ChbR and the substrate of ChbF. The polypeptide is Chitooligosaccharide deacetylase (Salmonella typhimurium (strain LT2 / SGSC1412 / ATCC 700720)).